Consider the following 179-residue polypeptide: Ribosome maturation factor RimM (179 aa).

The PRC barrel domain maps to 102–173 (PEEYHYRDLI…ALHVQPPPGL (72 aa)).

This sequence belongs to the RimM family. As to quaternary structure, binds ribosomal protein uS19.

It is found in the cytoplasm. An accessory protein needed during the final step in the assembly of 30S ribosomal subunit, possibly for assembly of the head region. Essential for efficient processing of 16S rRNA. May be needed both before and after RbfA during the maturation of 16S rRNA. It has affinity for free ribosomal 30S subunits but not for 70S ribosomes. The sequence is that of Ribosome maturation factor RimM from Synechococcus sp. (strain JA-2-3B'a(2-13)) (Cyanobacteria bacterium Yellowstone B-Prime).